The chain runs to 300 residues: Acetylglutamate kinase (300 aa).

Residues 68–69 (GG), arginine 90, and asparagine 194 each bind substrate.

The protein belongs to the acetylglutamate kinase family. ArgB subfamily.

Its subcellular location is the cytoplasm. The enzyme catalyses N-acetyl-L-glutamate + ATP = N-acetyl-L-glutamyl 5-phosphate + ADP. Its pathway is amino-acid biosynthesis; L-arginine biosynthesis; N(2)-acetyl-L-ornithine from L-glutamate: step 2/4. In terms of biological role, catalyzes the ATP-dependent phosphorylation of N-acetyl-L-glutamate. The sequence is that of Acetylglutamate kinase from Methanocaldococcus jannaschii (strain ATCC 43067 / DSM 2661 / JAL-1 / JCM 10045 / NBRC 100440) (Methanococcus jannaschii).